A 47-amino-acid chain; its full sequence is Packaging protein P22 (47 aa).

A helical transmembrane segment spans residues 22 to 42; the sequence is TGWLAFVGLIIVAIILWQQII.

In terms of assembly, heterodimer of P20 and P22; further multimerizes as hexamers of heterodimers. Part of the dodecameric portal complex that is composed of the packaging efficiency factor P6, the DNA packaging ATPase P9, and the internal heterododecamer P20/P22 which spans the virion inner membrane.

It localises to the virion membrane. Together with P22, forms the internal part of the portal complex embeded in the virion internal membrane and which plays critical roles in genome packaging and genome ejection. Both proteins multimerize as a single ring-shaped heterdodecamer arranged around a central channel and interact with the P6/P9 external part of the portal. The chain is Packaging protein P22 (XXII) from Enterobacteria phage PRD1 (Bacteriophage PRD1).